The sequence spans 404 residues: Argininosuccinate synthase (404 aa).

ATP contacts are provided by residues A12–S20 and A40. 2 residues coordinate L-citrulline: Y92 and S97. G122 provides a ligand contact to ATP. Positions 124, 128, and 129 each coordinate L-aspartate. N128 contributes to the L-citrulline binding site. Residues R132, S181, S190, E266, and Y278 each contribute to the L-citrulline site.

It belongs to the argininosuccinate synthase family. Type 1 subfamily. In terms of assembly, homotetramer.

The protein resides in the cytoplasm. It catalyses the reaction L-citrulline + L-aspartate + ATP = 2-(N(omega)-L-arginino)succinate + AMP + diphosphate + H(+). Its pathway is amino-acid biosynthesis; L-arginine biosynthesis; L-arginine from L-ornithine and carbamoyl phosphate: step 2/3. In Erwinia tasmaniensis (strain DSM 17950 / CFBP 7177 / CIP 109463 / NCPPB 4357 / Et1/99), this protein is Argininosuccinate synthase.